Consider the following 135-residue polypeptide: Protein Wnt-7b (135 aa).

Intrachain disulfides connect C3/C17 and C5/C12. Residue S9 is the site of O-palmitoleoyl serine; by PORCN attachment. Positions 41–69 (VEVVRANRLRQPTFLKIKKVRSYQKPMET) are disordered linker. 3 disulfides stabilise this stretch: C81–C112, C97–C107, and C134–C135. N98 is a glycosylation site (N-linked (GlcNAc...) asparagine).

This sequence belongs to the Wnt family. Post-translationally, palmitoleoylation is required for efficient binding to frizzled receptors. Depalmitoleoylation leads to Wnt signaling pathway inhibition. In adults, in brain and lung.

The protein localises to the secreted. The protein resides in the extracellular space. It is found in the extracellular matrix. Its function is as follows. Ligand for members of the frizzled family of seven transmembrane receptors that functions in the canonical Wnt/beta-catenin signaling pathway. Required for normal fusion of the chorion and the allantois during placenta development. Required for central nervous system (CNS) angiogenesis and blood-brain barrier regulation. The sequence is that of Protein Wnt-7b (wnt7b) from Xenopus laevis (African clawed frog).